Consider the following 2037-residue polypeptide: Fatty acid synthase subunit beta (2037 aa).

Positions 1–453 are acetyltransferase; sequence MSTHRPFQLT…VYDTFDGSDF (453 aa). Catalysis depends on S261, which acts as the For acetyltransferase activity. An enoyl reductase region spans residues 465-798; sequence VKLITELPVH…GSRVMTSKES (334 aa). The interval 1132 to 1612 is dehydratase; it reads GTELNWLQAF…LPNDTLQTTM (481 aa). Residues 1506-1634 form the MaoC-like domain; that stretch reads NGKTIEESVI…KVETRNVETE (129 aa). Residues 1613-1833 are malonyl/palmitoyl transferase; sequence EHVGMINGRK…MTMQVAVPRD (221 aa). S1796 serves as the catalytic For malonyltransferase activity.

It belongs to the fungal fatty acid synthetase subunit beta family. In terms of assembly, [Alpha(6)beta(6)] hexamers of two multifunctional subunits (alpha and beta).

The catalysed reaction is acetyl-CoA + n malonyl-CoA + 2n NADPH + 4n H(+) = a long-chain-acyl-CoA + n CoA + n CO2 + 2n NADP(+).. It catalyses the reaction holo-[ACP] + acetyl-CoA = acetyl-[ACP] + CoA. The enzyme catalyses holo-[ACP] + malonyl-CoA = malonyl-[ACP] + CoA. It carries out the reaction a (3R)-hydroxyacyl-[ACP] = a (2E)-enoyl-[ACP] + H2O. The catalysed reaction is a 2,3-saturated acyl-[ACP] + NAD(+) = a (2E)-enoyl-[ACP] + NADH + H(+). It catalyses the reaction (9Z)-octadecenoyl-[ACP] + H2O = (9Z)-octadecenoate + holo-[ACP] + H(+). Fatty acid synthetase catalyzes the formation of long-chain fatty acids from acetyl-CoA, malonyl-CoA and NADPH. The beta subunit contains domains for: [acyl-carrier-protein] acetyltransferase and malonyltransferase, S-acyl fatty acid synthase thioesterase, enoyl-[acyl-carrier-protein] reductase, and 3-hydroxypalmitoyl-[acyl-carrier-protein] dehydratase. The protein is Fatty acid synthase subunit beta (FAS1) of Candida albicans (Yeast).